Consider the following 706-residue polypeptide: Glycylpeptide N-tetradecanoyltransferase (706 aa).

A disordered region spans residues 1–119 (MSGIAGTSQD…LASGSSREGK (119 aa)). The segment covering 7–42 (TSQDTSVAASASSSSTRPAAASSSIAPPSPSLTTAP) has biased composition (low complexity). The span at 47 to 65 (EQDDDDDQENDDEEEEEEG) shows a compositional bias: acidic residues. The span at 78-95 (KQRKKKKSKAAAKLRKKL) shows a compositional bias: basic residues. Residues 180–183 (HKFW), 317–319 (LCV), and 325–329 (SKRLA) contribute to the tetradecanoyl-CoA site. Val706 acts as the Proton acceptor; via carboxylate in catalysis.

Belongs to the NMT family. Monomer.

The protein localises to the cytoplasm. The catalysed reaction is N-terminal glycyl-[protein] + tetradecanoyl-CoA = N-tetradecanoylglycyl-[protein] + CoA + H(+). Adds a myristoyl group to the N-terminal glycine residue of certain cellular proteins. This chain is Glycylpeptide N-tetradecanoyltransferase (NMT1), found in Mycosarcoma maydis (Corn smut fungus).